The following is a 388-amino-acid chain: Dauer abnormal formation protein 25 (388 aa).

3 ANK repeats span residues 40-69 (SGMS…DVND), 74-103 (TLYT…RMYL), and 107-137 (IGKT…DVIE). Positions 321, 324, 333, 336, 341, 345, 353, and 357 each coordinate Zn(2+). The MYND-type zinc finger occupies 321–357 (CSVCGHPGAKKRCTQCKLAYCSQECQKFDWPIHKKVC).

Expressed in many ciliated sensory neurons.

Its subcellular location is the cell projection. It is found in the cilium. In terms of biological role, may be involved in the trafficking and dendritic transport of signaling proteins, such as the receptor-type guanylate cyclases gcy-12 and daf-11, to the cilia. In ciliated sensory neurons, required for the calcium flux to the cytoplasm in response to onset and removal of a nitric oxide (NO) stimulus and is thereby required for the behavioral avoidance response to NO-producing organisms like P.aeruginosa. The chain is Dauer abnormal formation protein 25 (daf-25) from Caenorhabditis elegans.